A 119-amino-acid chain; its full sequence is Large ribosomal subunit protein bL20 (119 aa).

The protein belongs to the bacterial ribosomal protein bL20 family.

In terms of biological role, binds directly to 23S ribosomal RNA and is necessary for the in vitro assembly process of the 50S ribosomal subunit. It is not involved in the protein synthesizing functions of that subunit. This Buchnera aphidicola subsp. Cinara cedri (strain Cc) protein is Large ribosomal subunit protein bL20.